A 370-amino-acid chain; its full sequence is tRNA/tmRNA (uracil-C(5))-methyltransferase (370 aa).

Gln-190, Tyr-218, Asn-223, Glu-239, and Asp-299 together coordinate S-adenosyl-L-methionine. Cys-324 (nucleophile) is an active-site residue. The Proton acceptor role is filled by Glu-358.

This sequence belongs to the class I-like SAM-binding methyltransferase superfamily. RNA M5U methyltransferase family. TrmA subfamily.

The catalysed reaction is uridine(54) in tRNA + S-adenosyl-L-methionine = 5-methyluridine(54) in tRNA + S-adenosyl-L-homocysteine + H(+). The enzyme catalyses uridine(341) in tmRNA + S-adenosyl-L-methionine = 5-methyluridine(341) in tmRNA + S-adenosyl-L-homocysteine + H(+). Dual-specificity methyltransferase that catalyzes the formation of 5-methyluridine at position 54 (m5U54) in all tRNAs, and that of position 341 (m5U341) in tmRNA (transfer-mRNA). This Sodalis glossinidius (strain morsitans) protein is tRNA/tmRNA (uracil-C(5))-methyltransferase.